The following is a 96-amino-acid chain: uncharacterized protein (96 aa).

This is an uncharacterized protein from Escherichia coli O157:H7.